A 337-amino-acid polypeptide reads, in one-letter code: 5-dehydro-2-deoxygluconokinase (337 aa).

It belongs to the carbohydrate kinase PfkB family.

It carries out the reaction 5-dehydro-2-deoxy-D-gluconate + ATP = 6-phospho-5-dehydro-2-deoxy-D-gluconate + ADP + H(+). The protein operates within polyol metabolism; myo-inositol degradation into acetyl-CoA; acetyl-CoA from myo-inositol: step 5/7. In terms of biological role, catalyzes the phosphorylation of 5-dehydro-2-deoxy-D-gluconate (2-deoxy-5-keto-D-gluconate or DKG) to 6-phospho-5-dehydro-2-deoxy-D-gluconate (DKGP). The chain is 5-dehydro-2-deoxygluconokinase from Geobacillus thermodenitrificans (strain NG80-2).